Consider the following 255-residue polypeptide: 1-(5-phosphoribosyl)-5-[(5-phosphoribosylamino)methylideneamino] imidazole-4-carboxamide isomerase (255 aa).

The active-site Proton acceptor is Asp-12. Residue Asp-131 is the Proton donor of the active site.

Belongs to the HisA/HisF family.

It is found in the cytoplasm. It carries out the reaction 1-(5-phospho-beta-D-ribosyl)-5-[(5-phospho-beta-D-ribosylamino)methylideneamino]imidazole-4-carboxamide = 5-[(5-phospho-1-deoxy-D-ribulos-1-ylimino)methylamino]-1-(5-phospho-beta-D-ribosyl)imidazole-4-carboxamide. The protein operates within amino-acid biosynthesis; L-histidine biosynthesis; L-histidine from 5-phospho-alpha-D-ribose 1-diphosphate: step 4/9. The sequence is that of 1-(5-phosphoribosyl)-5-[(5-phosphoribosylamino)methylideneamino] imidazole-4-carboxamide isomerase from Cutibacterium acnes (strain DSM 16379 / KPA171202) (Propionibacterium acnes).